The following is a 219-amino-acid chain: Transmembrane protein 247 (219 aa).

2 stretches are compositionally biased toward basic and acidic residues: residues 1–10 (MAAEDREMME) and 29–45 (SKSE…ESQK). The tract at residues 1-101 (MAAEDREMME…LPPTPGTERN (101 aa)) is disordered. Positions 121 to 156 (LHEKNQRQRQHEVVMEQLQRERQHEVVMEQLQQEAA) form a coiled coil. 2 helical membrane passes run 167-187 (FLLP…IHII) and 194-214 (VFFL…LCLI).

The protein resides in the membrane. The protein is Transmembrane protein 247 (TMEM247) of Homo sapiens (Human).